The chain runs to 274 residues: NH(3)-dependent NAD(+) synthetase (274 aa).

46-53 (GISGGQDS) provides a ligand contact to ATP. Residue Asp-52 participates in Mg(2+) binding. Arg-140 is a binding site for deamido-NAD(+). Thr-160 contributes to the ATP binding site. Residue Glu-165 participates in Mg(2+) binding. 2 residues coordinate deamido-NAD(+): Lys-173 and Asp-180. ATP-binding residues include Lys-189 and Thr-211. Position 260 to 261 (260 to 261 (HK)) interacts with deamido-NAD(+).

Belongs to the NAD synthetase family. In terms of assembly, homodimer.

The catalysed reaction is deamido-NAD(+) + NH4(+) + ATP = AMP + diphosphate + NAD(+) + H(+). Its pathway is cofactor biosynthesis; NAD(+) biosynthesis; NAD(+) from deamido-NAD(+) (ammonia route): step 1/1. In terms of biological role, catalyzes the ATP-dependent amidation of deamido-NAD to form NAD. Uses ammonia as a nitrogen source. The protein is NH(3)-dependent NAD(+) synthetase of Streptococcus pyogenes serotype M3 (strain ATCC BAA-595 / MGAS315).